The sequence spans 754 residues: MSDRYELFLTCPKGLEGLLIEEAVGLGLEQAREHTSAVRGMADMETAYRLCLWSRLANRVLLVLKRFPMKDAEDLYHGVLDVDWQDHMLADGTLAVEFSGHGSGIDNTHFGALKVKDAIVDKLRTPTGERPSVDKLNPDLRIHLRLDRGEAILSLDLSGHSLHQRGYRLQQGAAPLKENLAAAILIRSGWPRIAAEGGALADPMCGVGTFLVEAAMIAADIAPNLKREQWGFTAWLGHVPALWRKLHDEALARAQAGLAKPPLWIRGYEADPRLIQPGRNNVERAGLSEWIKIYQGEVGTFEPRPDQNQKGLVICNPPYGERLGDEASLLYLYQNLGGRLRQACLNWEAAVFTGAPDLGKRMGIRSHKQYSFWNGALPCKLLLIKVLPDQFVTGERRTAEQRQVEREQAQAAADEAPVRQYNKNGNPIKPAPAPAPVVEQARLSEGGQMFANRLQKNLKQLGKWAKREGIECYRVYDADMPEYSLAIDLYQDWVHVQEYAAPKSVDPEKAQARLFDALAAIPQALNVDKSRVVIKRRERQSGTKQYERQSAQGQFTEVREGGIKLLVNLTDYLDTGLFLDHRPMRMRIQQEAAGKRFLNLFCYTATASVHAAKGGARSTTSVDLSKTYLDWARRNFSLNGFSDKNRLEQGDVMAWLDSCRDEFDLIFIDPPTFSNSKRMEGVFDVQRDQVQLLDLAMARLAPGGVLYFSNNFRKFQLDENLAARYQIEEITAKTIDPDFARNGKIHRAWKVTAR.

A THUMP domain is found at 46 to 157 (TAYRLCLWSR…RGEAILSLDL (112 aa)).

The protein belongs to the methyltransferase superfamily. RlmKL family.

The protein localises to the cytoplasm. The enzyme catalyses guanosine(2445) in 23S rRNA + S-adenosyl-L-methionine = N(2)-methylguanosine(2445) in 23S rRNA + S-adenosyl-L-homocysteine + H(+). The catalysed reaction is guanosine(2069) in 23S rRNA + S-adenosyl-L-methionine = N(2)-methylguanosine(2069) in 23S rRNA + S-adenosyl-L-homocysteine + H(+). In terms of biological role, specifically methylates the guanine in position 2445 (m2G2445) and the guanine in position 2069 (m7G2069) of 23S rRNA. The sequence is that of Ribosomal RNA large subunit methyltransferase K/L from Pseudomonas fluorescens (strain ATCC BAA-477 / NRRL B-23932 / Pf-5).